We begin with the raw amino-acid sequence, 214 residues long: MASLFKKKTVDDIIREQNKELRGTQRAITRDRAALEKQEKQLEMEIKKMAKAGNKDACRVLAKQLVQLRKQKTRTYAVSSKVTSMSTQTKVMSSQMKMAGAMSTTAKTMQAVNKKMDPQKTLQTMQNFQKENMKMEMTEEMINDTLDDIFDASDDEEESQDIVNQVLDEIGIEISGKMAKAPSAAKGLPSTSASKSSGISDEEIERQLKALGVD.

A coiled-coil region spans residues 16 to 55 (EQNKELRGTQRAITRDRAALEKQEKQLEMEIKKMAKAGNK). Residues 178–203 (MAKAPSAAKGLPSTSASKSSGISDEE) are disordered. Residues 189-199 (PSTSASKSSGI) show a composition bias toward polar residues. Residues 202 to 212 (EEIERQLKALG) carry the MIT-interacting motif motif.

This sequence belongs to the SNF7 family. Probable core component of the endosomal sorting required for transport complex III (ESCRT-III). ESCRT-III components are thought to multimerize to form a flat lattice on the perimeter membrane of the endosome.

The protein resides in the cytoplasm. The protein localises to the cytosol. It is found in the late endosome membrane. In terms of biological role, probable core component of the endosomal sorting required for transport complex III (ESCRT-III) which is involved in multivesicular bodies (MVBs) formation and sorting of endosomal cargo proteins into MVBs. MVBs contain intraluminal vesicles (ILVs) that are generated by invagination and scission from the limiting membrane of the endosome and mostly are delivered to lysosomes enabling degradation of membrane proteins, such as stimulated growth factor receptors, lysosomal enzymes and lipids. The chain is Charged multivesicular body protein 2b (chmp2b) from Xenopus tropicalis (Western clawed frog).